Reading from the N-terminus, the 331-residue chain is Ribosomal RNA small subunit methyltransferase H (331 aa).

S-adenosyl-L-methionine-binding positions include 48-50 (GGH), Asp67, Asp115, and Gln122. The segment at 297 to 331 (RGTEKPTEEEISENRRASSAKVRAVEKIRTSRTTA) is disordered. Residues 298-312 (GTEKPTEEEISENRR) are compositionally biased toward basic and acidic residues.

The protein belongs to the methyltransferase superfamily. RsmH family.

The protein localises to the cytoplasm. The catalysed reaction is cytidine(1402) in 16S rRNA + S-adenosyl-L-methionine = N(4)-methylcytidine(1402) in 16S rRNA + S-adenosyl-L-homocysteine + H(+). In terms of biological role, specifically methylates the N4 position of cytidine in position 1402 (C1402) of 16S rRNA. The polypeptide is Ribosomal RNA small subunit methyltransferase H (Micrococcus luteus (strain ATCC 4698 / DSM 20030 / JCM 1464 / CCM 169 / CCUG 5858 / IAM 1056 / NBRC 3333 / NCIMB 9278 / NCTC 2665 / VKM Ac-2230) (Micrococcus lysodeikticus)).